We begin with the raw amino-acid sequence, 710 residues long: Dihydroxyacetone synthase (710 aa).

Residues H78 and 128-130 (GPL) each bind thiamine diphosphate. Residues D169, N199, and V201 each coordinate Mg(2+). Thiamine diphosphate is bound at residue N199. Thiamine diphosphate contacts are provided by H275, E433, and F461. Residue E433 is the Proton donor of the active site. The Microbody targeting signal signature appears at 708–710 (NKL).

It belongs to the transketolase family. Requires Mg(2+) as cofactor. Ca(2+) serves as cofactor. It depends on Mn(2+) as a cofactor. Co(2+) is required as a cofactor. The cofactor is thiamine diphosphate.

It is found in the peroxisome. The enzyme catalyses D-xylulose 5-phosphate + formaldehyde = dihydroxyacetone + D-glyceraldehyde 3-phosphate. Its function is as follows. This is the major methanol assimilatory enzyme from the methylotrophic Hansenula polymorpha. This Pichia angusta (Yeast) protein is Dihydroxyacetone synthase (DAS).